Reading from the N-terminus, the 267-residue chain is Small ribosomal subunit protein mS23 (267 aa).

The disordered stretch occupies residues 230–267; the sequence is VKTASKDGKSSNGSMGAEDVVEKTTSAWETEFVEEESS.

This sequence belongs to the mitochondrion-specific ribosomal protein mS23 family. In terms of assembly, component of the mitochondrial small ribosomal subunit.

The protein resides in the mitochondrion. The sequence is that of Small ribosomal subunit protein mS23 (RSM25) from Meyerozyma guilliermondii (strain ATCC 6260 / CBS 566 / DSM 6381 / JCM 1539 / NBRC 10279 / NRRL Y-324) (Yeast).